Consider the following 242-residue polypeptide: Caffeoyl-CoA O-methyltransferase 3 (242 aa).

Substrate is bound at residue Lys-16. S-adenosyl-L-methionine-binding positions include Thr-58, Glu-80, 82–83 (GV), Ser-88, Asp-106, and Ala-135. Asp-158 lines the substrate pocket. Asp-158 is an a divalent metal cation binding site. Asp-160 provides a ligand contact to S-adenosyl-L-methionine. Asp-184 and Asn-185 together coordinate a divalent metal cation. Asn-189 serves as a coordination point for substrate.

This sequence belongs to the class I-like SAM-binding methyltransferase superfamily. Cation-dependent O-methyltransferase family. CCoAMT subfamily. The cofactor is Mg(2+). In terms of tissue distribution, mostly expressed in the bottom and middle parts of the stems.

The enzyme catalyses (E)-caffeoyl-CoA + S-adenosyl-L-methionine = (E)-feruloyl-CoA + S-adenosyl-L-homocysteine + H(+). It participates in aromatic compound metabolism; phenylpropanoid biosynthesis. In terms of biological role, methylates caffeoyl-CoA to feruloyl-CoA and 5-hydroxyferuloyl-CoA to sinapoyl-CoA. Plays a role in the synthesis of feruloylated polysaccharides. Involved in the reinforcement of the plant cell wall. Also involved in the responding to wounding or pathogen challenge by the increased formation of cell wall-bound ferulic acid polymers. Also methylates free caffeic and 5-hydroxyferulic acids. This chain is Caffeoyl-CoA O-methyltransferase 3 (CCOAOMT3), found in Nicotiana tabacum (Common tobacco).